Here is a 101-residue protein sequence, read N- to C-terminus: TrfB transcriptional repressor protein (101 aa).

The segment at residues 37-56 (QATFATSLGLTRGAVSQAVH) is a DNA-binding region (H-T-H motif).

Functionally, in conjunction with KorB, inhibits the transcription of kilA, trfA and korAB operons. In conjunction with KorC is responsible for the negative control of kilC and kilE operons. The chain is TrfB transcriptional repressor protein (trfB) from Escherichia coli.